We begin with the raw amino-acid sequence, 301 residues long: Troponin T, cardiac muscle (301 aa).

2 stretches are compositionally biased toward acidic residues: residues 1–42 (MSDL…EEEA) and 50–74 (AETEETQAEEDGQEEEDKEDEDGPV). Disordered stretches follow at residues 1–99 (MSDL…GERV) and 125–223 (ENRK…KKKK). An N-acetylserine modification is found at Ser-2. Ser-2 is modified (phosphoserine; by CK2). A compositionally biased stretch (pro residues) spans 82–93 (RPFMPNLVPPKI). 2 stretches are compositionally biased toward basic and acidic residues: residues 125-186 (ENRK…DEAR) and 206-223 (QTERKSGKRQTEREKKKK). Thr-207 bears the Phosphothreonine; by PKC/PRKCA mark. Residue Ser-211 is modified to Phosphoserine; by PKC/PRKCA. The residue at position 216 (Thr-216) is a Phosphothreonine; by PKC/PRKCA and RAF1. The residue at position 297 (Thr-297) is a Phosphothreonine; by PKC/PRKCA.

The protein belongs to the troponin T family. In terms of assembly, binds with troponins I and C to make the thin-filament regulatory complex, troponin. In terms of processing, phosphorylation at Thr-216 by PRKCA induces significant reduction in myofilament calcium sensitivity and actomyosin ATPase activity. As to expression, the major isoform in adult heart is CTNT4.

In terms of biological role, troponin T is the tropomyosin-binding subunit of troponin, the thin filament regulatory complex which confers calcium-sensitivity to striated muscle actomyosin ATPase activity. The polypeptide is Troponin T, cardiac muscle (TNNT2) (Oryctolagus cuniculus (Rabbit)).